The sequence spans 185 residues: Thiol:disulfide interchange protein DsbE (185 aa).

Residues 1 to 4 (MKRN) lie on the Cytoplasmic side of the membrane. The helical transmembrane segment at 5–25 (VLLLPLLIFLLIAAALLWQLA) threads the bilayer. The Periplasmic portion of the chain corresponds to 26–185 (RNAQGDDPTN…WDRYSREAAQ (160 aa)). Positions 39–177 (ALTGKPVPAF…WESELKPLWD (139 aa)) constitute a Thioredoxin domain. Cysteine 80 and cysteine 83 are joined by a disulfide.

The protein belongs to the thioredoxin family. DsbE subfamily.

It localises to the cell inner membrane. Functionally, involved in disulfide bond formation. Catalyzes a late, reductive step in the assembly of periplasmic c-type cytochromes, probably the reduction of disulfide bonds of the apocytochrome c to allow covalent linkage with the heme. Possible subunit of a heme lyase. This Salmonella typhi protein is Thiol:disulfide interchange protein DsbE (dsbE1).